A 306-amino-acid chain; its full sequence is Homeobox protein CUP9 (306 aa).

A disordered region spans residues 75–123 (PAINSGGTSTTATPTASTVETSKTSSSAMDTQSQYGSSKKSKSASDDAK). The segment covering 79–96 (SGGTSTTATPTASTVETS) has biased composition (low complexity). Residues 97-110 (KTSSSAMDTQSQYG) show a composition bias toward polar residues. Positions 162–224 (NSGRRSNLPK…NVRRRKIFSD (63 aa)) form a DNA-binding region, homeobox; TALE-type.

This sequence belongs to the TALE/CUP9 homeobox family.

It localises to the nucleus. Probable DNA-binding protein which plays a role in protecting yeast cells against copper toxicity. May regulate the expression of important copper homeostatic genes. This is Homeobox protein CUP9 (CUP9) from Saccharomyces cerevisiae (strain ATCC 204508 / S288c) (Baker's yeast).